The chain runs to 105 residues: Large ribosomal subunit protein uL24 (105 aa).

It belongs to the universal ribosomal protein uL24 family. Part of the 50S ribosomal subunit.

Its function is as follows. One of two assembly initiator proteins, it binds directly to the 5'-end of the 23S rRNA, where it nucleates assembly of the 50S subunit. One of the proteins that surrounds the polypeptide exit tunnel on the outside of the subunit. The polypeptide is Large ribosomal subunit protein uL24 (Halorhodospira halophila (strain DSM 244 / SL1) (Ectothiorhodospira halophila (strain DSM 244 / SL1))).